A 155-amino-acid chain; its full sequence is Endoribonuclease YbeY (155 aa).

Residues H117, H121, and H127 each coordinate Zn(2+).

This sequence belongs to the endoribonuclease YbeY family. Requires Zn(2+) as cofactor.

It localises to the cytoplasm. Single strand-specific metallo-endoribonuclease involved in late-stage 70S ribosome quality control and in maturation of the 3' terminus of the 16S rRNA. The chain is Endoribonuclease YbeY from Dichelobacter nodosus (strain VCS1703A).